The sequence spans 315 residues: PIH1 domain-containing protein 2 (315 aa).

It belongs to the PIH1 family.

The chain is PIH1 domain-containing protein 2 (PIH1D2) from Homo sapiens (Human).